The chain runs to 409 residues: uncharacterized protein (409 aa).

Residue histidine 46 participates in Zn(2+) binding. Catalysis depends on glutamate 49, which acts as the Proton acceptor. Residues histidine 50 and glutamate 126 each contribute to the Zn(2+) site.

It belongs to the peptidase M16 family. Requires Zn(2+) as cofactor.

This is an uncharacterized protein from Bacillus subtilis (strain 168).